We begin with the raw amino-acid sequence, 858 residues long: Transcription factor pytR (858 aa).

Positions Met-1–Leu-35 are disordered. A DNA-binding region (zn(2)-C6 fungal-type) is located at residues Cys-39–Cys-65. A disordered region spans residues Arg-72–Gly-99.

The protein resides in the nucleus. In terms of biological role, transcription factor that regulates the expression of the gene cluster that mediates the biosynthesis of Pyranterreones, a family of antioxidative compounds. The chain is Transcription factor pytR from Aspergillus terreus (strain NIH 2624 / FGSC A1156).